Consider the following 273-residue polypeptide: Anthranilate synthase beta subunit 2, chloroplastic (273 aa).

The N-terminal 36 residues, 1–36 (MAATTLYNSCLLQPKYGFTTRRLNQSLVNSLTNPTR), are a transit peptide targeting the chloroplast. Positions 71–270 (PIIVIDNYDS…IKLVEKKESE (200 aa)) constitute a Glutamine amidotransferase type-1 domain. The active-site Nucleophile is cysteine 149. Residues histidine 244 and glutamate 246 contribute to the active site.

Heterotetramer consisting of two non-identical subunits: a beta subunit and a large alpha subunit.

It is found in the plastid. Its subcellular location is the chloroplast. It carries out the reaction chorismate + L-glutamine = anthranilate + pyruvate + L-glutamate + H(+). It participates in amino-acid biosynthesis; L-tryptophan biosynthesis; L-tryptophan from chorismate: step 1/5. With respect to regulation, feedback inhibition by tryptophan. In terms of biological role, part of a heterotetrameric complex that catalyzes the two-step biosynthesis of anthranilate, an intermediate in the biosynthesis of L-tryptophan. In the first step, the glutamine-binding beta subunit of anthranilate synthase (AS) provides the glutamine amidotransferase activity which generates ammonia as a substrate that, along with chorismate, is used in the second step, catalyzed by the large alpha subunit of AS to produce anthranilate. The protein is Anthranilate synthase beta subunit 2, chloroplastic (ASB2) of Arabidopsis thaliana (Mouse-ear cress).